A 299-amino-acid polypeptide reads, in one-letter code: Ribosomal RNA small subunit methyltransferase H (299 aa).

S-adenosyl-L-methionine is bound by residues 32-34 (AGH), Asp-52, Phe-79, Asp-100, and Gln-107.

Belongs to the methyltransferase superfamily. RsmH family.

Its subcellular location is the cytoplasm. It carries out the reaction cytidine(1402) in 16S rRNA + S-adenosyl-L-methionine = N(4)-methylcytidine(1402) in 16S rRNA + S-adenosyl-L-homocysteine + H(+). In terms of biological role, specifically methylates the N4 position of cytidine in position 1402 (C1402) of 16S rRNA. This chain is Ribosomal RNA small subunit methyltransferase H, found in Mycoplasmopsis pulmonis (strain UAB CTIP) (Mycoplasma pulmonis).